Here is a 101-residue protein sequence, read N- to C-terminus: Small ribosomal subunit protein uS14 (101 aa).

This sequence belongs to the universal ribosomal protein uS14 family. As to quaternary structure, part of the 30S ribosomal subunit. Contacts proteins S3 and S10.

Functionally, binds 16S rRNA, required for the assembly of 30S particles and may also be responsible for determining the conformation of the 16S rRNA at the A site. The polypeptide is Small ribosomal subunit protein uS14 (Arthrobacter sp. (strain FB24)).